The chain runs to 310 residues: Putative S-adenosyl-L-methionine-dependent methyltransferase MUL_4762 (310 aa).

Residues D132 and 161–162 (DL) each bind S-adenosyl-L-methionine.

The protein belongs to the UPF0677 family.

In terms of biological role, exhibits S-adenosyl-L-methionine-dependent methyltransferase activity. This chain is Putative S-adenosyl-L-methionine-dependent methyltransferase MUL_4762, found in Mycobacterium ulcerans (strain Agy99).